The sequence spans 539 residues: Chaperonin GroEL 1 (539 aa).

ATP-binding positions include threonine 29–proline 32, aspartate 86–threonine 90, glycine 413, asparagine 478–alanine 480, and aspartate 494.

The protein belongs to the chaperonin (HSP60) family. Forms a cylinder of 14 subunits composed of two heptameric rings stacked back-to-back. Interacts with the co-chaperonin GroES.

The protein localises to the cytoplasm. The catalysed reaction is ATP + H2O + a folded polypeptide = ADP + phosphate + an unfolded polypeptide.. Its function is as follows. Together with its co-chaperonin GroES, plays an essential role in assisting protein folding. The GroEL-GroES system forms a nano-cage that allows encapsulation of the non-native substrate proteins and provides a physical environment optimized to promote and accelerate protein folding. In Corynebacterium diphtheriae (strain ATCC 700971 / NCTC 13129 / Biotype gravis), this protein is Chaperonin GroEL 1.